A 123-amino-acid polypeptide reads, in one-letter code: MPTINQLIRKPRSPKPVRNKVPALKGCPQRRGVCTRVYTTTPKKPNSALRKVAKVRLTTGIEAVCYIPGEGHNLQEHSVVLIRGGRVKDLPGVRYHILRGVLDTQGVKDRKQRRSLYGAKRPK.

Position 89 is a 3-methylthioaspartic acid (Asp-89).

This sequence belongs to the universal ribosomal protein uS12 family. In terms of assembly, part of the 30S ribosomal subunit. Contacts proteins S8 and S17. May interact with IF1 in the 30S initiation complex.

Its function is as follows. With S4 and S5 plays an important role in translational accuracy. Interacts with and stabilizes bases of the 16S rRNA that are involved in tRNA selection in the A site and with the mRNA backbone. Located at the interface of the 30S and 50S subunits, it traverses the body of the 30S subunit contacting proteins on the other side and probably holding the rRNA structure together. The combined cluster of proteins S8, S12 and S17 appears to hold together the shoulder and platform of the 30S subunit. In Caulobacter vibrioides (strain ATCC 19089 / CIP 103742 / CB 15) (Caulobacter crescentus), this protein is Small ribosomal subunit protein uS12.